The sequence spans 257 residues: Homeobox protein goosecoid (257 aa).

The homeobox DNA-binding region spans 160–219 (KRRHRTIFTDEQLEALENLFQETKYPDVGTREQLARKVHLREEKVEVWFKNRRAKWRRQK). The tract at residues 213–257 (AKWRRQKRSSSEESENAEKWNKTSSSKASPEKREEEGKSDLDSDS) is disordered. The span at 241–257 (SPEKREEEGKSDLDSDS) shows a compositional bias: basic and acidic residues.

This sequence belongs to the paired homeobox family. Bicoid subfamily.

The protein resides in the nucleus. Its function is as follows. Regulates chordin (CHRD). May play a role in spatial programing within discrete embryonic fields or lineage compartments during organogenesis. In concert with NKX3-2, plays a role in defining the structural components of the middle ear; required for the development of the entire tympanic ring. Probably involved in the regulatory networks that define neural crest cell fate specification and determine mesoderm cell lineages in mammals. In Gorilla gorilla gorilla (Western lowland gorilla), this protein is Homeobox protein goosecoid (GSC).